The following is a 443-amino-acid chain: Proline--tRNA ligase (443 aa).

This sequence belongs to the class-II aminoacyl-tRNA synthetase family. ProS type 2 subfamily. Homodimer.

The protein localises to the cytoplasm. It carries out the reaction tRNA(Pro) + L-proline + ATP = L-prolyl-tRNA(Pro) + AMP + diphosphate. Its function is as follows. Catalyzes the attachment of proline to tRNA(Pro) in a two-step reaction: proline is first activated by ATP to form Pro-AMP and then transferred to the acceptor end of tRNA(Pro). This Methylobacterium nodulans (strain LMG 21967 / CNCM I-2342 / ORS 2060) protein is Proline--tRNA ligase.